The sequence spans 198 residues: Dual specificity protein phosphatase 13B (198 aa).

The region spanning His-45 to Arg-193 is the Tyrosine-protein phosphatase domain. Cys-138 (phosphocysteine intermediate) is an active-site residue.

The protein belongs to the protein-tyrosine phosphatase family. Non-receptor class dual specificity subfamily. As to expression, highly expressed in the testis (at protein level). Also found in the skeletal muscle.

The enzyme catalyses O-phospho-L-tyrosyl-[protein] + H2O = L-tyrosyl-[protein] + phosphate. The catalysed reaction is O-phospho-L-seryl-[protein] + H2O = L-seryl-[protein] + phosphate. It catalyses the reaction O-phospho-L-threonyl-[protein] + H2O = L-threonyl-[protein] + phosphate. In terms of biological role, dual specificity phosphatase that dephosphorylates MAPK8/JNK and MAPK14/p38, but not MAPK1/ERK2, in vitro. Exhibits intrinsic phosphatase activity towards both phospho-seryl/threonyl and -tyrosyl residues, with similar specific activities in vitro. The polypeptide is Dual specificity protein phosphatase 13B (Homo sapiens (Human)).